A 225-amino-acid polypeptide reads, in one-letter code: Ribonuclease T (225 aa).

The segment at 1–21 (MSEDHFDDEHEGHGGGGGSRH) is disordered. An Exonuclease domain is found at 33–207 (VVVDVETGGF…YDTEKTAELF (175 aa)). Mg(2+)-binding residues include aspartate 36, glutamate 38, histidine 194, and aspartate 199. Catalysis depends on histidine 194, which acts as the Proton donor/acceptor.

This sequence belongs to the RNase T family. In terms of assembly, homodimer. Mg(2+) serves as cofactor.

In terms of biological role, trims short 3' overhangs of a variety of RNA species, leaving a one or two nucleotide 3' overhang. Responsible for the end-turnover of tRNA: specifically removes the terminal AMP residue from uncharged tRNA (tRNA-C-C-A). Also appears to be involved in tRNA biosynthesis. The protein is Ribonuclease T of Pseudomonas savastanoi pv. phaseolicola (strain 1448A / Race 6) (Pseudomonas syringae pv. phaseolicola (strain 1448A / Race 6)).